A 377-amino-acid polypeptide reads, in one-letter code: MSNGIVIIGSGFAARQLVKNIRKQDASIPLTLIAADSMDEYNKPDLSHVISQGQRADDLTRQTAGEFAEQFNLRLFPHTWVTDIDAEAHVVKSQNNQWQYDKLVLATGASAFVPPVPGRELMLTLNSQQEYRACETQLRDARRVLIIGGGLIGSELAMDFCRAGKMVTLIDNAASILASLMPPEVSSRLQHRLTEMGVHLLLKSQLQGLEKTDSGILATLDRQRCIEVDAVIAATGLRPETALARRAGLTINRGVCVDSYLQTSNADIYALGDCAEINGQVLPFLQPIQLSAMVLAKNLLGNNTPLKLPAMLVKIKTPELPLHLAGETQRQDLRWQINTERQGMVARGVDDADQLRAFVVSEDRMKEAFGLLKTLSM.

This sequence belongs to the FAD-dependent oxidoreductase family. It depends on FAD as a cofactor.

The protein resides in the cytoplasm. It catalyses the reaction 2 reduced [nitric oxide reductase rubredoxin domain] + NAD(+) + H(+) = 2 oxidized [nitric oxide reductase rubredoxin domain] + NADH. The protein operates within nitrogen metabolism; nitric oxide reduction. One of at least two accessory proteins for anaerobic nitric oxide (NO) reductase. Reduces the rubredoxin moiety of NO reductase. This is Nitric oxide reductase FlRd-NAD(+) reductase from Escherichia coli O81 (strain ED1a).